The primary structure comprises 244 residues: Type III pantothenate kinase (244 aa).

Position 12-19 (12-19) interacts with ATP; sequence VVGNTHVR. Residues Tyr-79 and 83–86 contribute to the substrate site; that span reads GLDR. Catalysis depends on Asp-85, which acts as the Proton acceptor. Position 105 (Asp-105) interacts with K(+). Thr-108 serves as a coordination point for ATP. Thr-163 is a binding site for substrate.

Belongs to the type III pantothenate kinase family. In terms of assembly, homodimer. NH4(+) is required as a cofactor. K(+) serves as cofactor.

It is found in the cytoplasm. It catalyses the reaction (R)-pantothenate + ATP = (R)-4'-phosphopantothenate + ADP + H(+). It participates in cofactor biosynthesis; coenzyme A biosynthesis; CoA from (R)-pantothenate: step 1/5. In terms of biological role, catalyzes the phosphorylation of pantothenate (Pan), the first step in CoA biosynthesis. The chain is Type III pantothenate kinase from Synechococcus sp. (strain JA-3-3Ab) (Cyanobacteria bacterium Yellowstone A-Prime).